We begin with the raw amino-acid sequence, 91 residues long: Small ribosomal subunit protein uS19 (91 aa).

Belongs to the universal ribosomal protein uS19 family.

Protein S19 forms a complex with S13 that binds strongly to the 16S ribosomal RNA. This chain is Small ribosomal subunit protein uS19, found in Bordetella bronchiseptica (strain ATCC BAA-588 / NCTC 13252 / RB50) (Alcaligenes bronchisepticus).